We begin with the raw amino-acid sequence, 410 residues long: Peptidase T (410 aa).

His-79 contacts Zn(2+). Residue Asp-81 is part of the active site. Residue Asp-142 participates in Zn(2+) binding. Catalysis depends on Glu-176, which acts as the Proton acceptor. Residues Glu-177, Asp-199, and His-381 each coordinate Zn(2+).

The protein belongs to the peptidase M20B family. Requires Zn(2+) as cofactor.

Its subcellular location is the cytoplasm. It catalyses the reaction Release of the N-terminal residue from a tripeptide.. In terms of biological role, cleaves the N-terminal amino acid of tripeptides. This chain is Peptidase T, found in Bacillus cereus (strain ATCC 10987 / NRS 248).